The primary structure comprises 699 residues: Elongation factor G (699 aa).

Residues 8-283 (EHIRNIGICA…AVVDFLPSPI (276 aa)) form the tr-type G domain. GTP contacts are provided by residues 17–24 (AHIDAGKT), 81–85 (DTPGH), and 135–138 (NKMD).

The protein belongs to the TRAFAC class translation factor GTPase superfamily. Classic translation factor GTPase family. EF-G/EF-2 subfamily.

The protein resides in the cytoplasm. Its function is as follows. Catalyzes the GTP-dependent ribosomal translocation step during translation elongation. During this step, the ribosome changes from the pre-translocational (PRE) to the post-translocational (POST) state as the newly formed A-site-bound peptidyl-tRNA and P-site-bound deacylated tRNA move to the P and E sites, respectively. Catalyzes the coordinated movement of the two tRNA molecules, the mRNA and conformational changes in the ribosome. The chain is Elongation factor G from Rickettsia helvetica.